A 595-amino-acid polypeptide reads, in one-letter code: APOBEC1 complementation factor (595 aa).

RRM domains are found at residues 56–134 (CEIF…ASVD), 136–218 (CRLF…WAEP), and 231–303 (KILY…LAKP). The segment at 360-409 (HFPATKGHLSNRALIRTPSVREIYMNVPVGAAGVRGLGGRGYLAYTGLGR) is required for nuclear localization.

In terms of assembly, part of the apolipoprotein B mRNA editing complex with APOBEC1. Interacts with TNPO2; TNPO2 may be responsible for transport of A1CF into the nucleus. Interacts with SYNCRIP. Interacts with CELF2/CUGBP2. Interacts with RBM47. In terms of tissue distribution, expressed primarily in liver, small intestine and kidney.

Its subcellular location is the nucleus. The protein localises to the endoplasmic reticulum. It is found in the cytoplasm. Its function is as follows. Essential component of the apolipoprotein B mRNA editing enzyme complex which is responsible for the postranscriptional editing of a CAA codon for Gln to a UAA codon for stop in APOB mRNA. Binds to APOB mRNA and is probably responsible for docking the catalytic subunit, APOBEC1, to the mRNA to allow it to deaminate its target cytosine. The complex also seems to protect the edited APOB mRNA from nonsense-mediated decay. This is APOBEC1 complementation factor (A1cf) from Mus musculus (Mouse).